The sequence spans 363 residues: Carbamoyl phosphate synthase small chain (363 aa).

Residues 1–171 (MEDGTLFAGA…PYRIPGPGPR (171 aa)) are CPSase. Residues Ser-39, Gly-219, and Gly-221 each contribute to the L-glutamine site. One can recognise a Glutamine amidotransferase type-1 domain in the interval 171 to 359 (RVVAVDFGAK…LALVDRSAVS (189 aa)). Catalysis depends on Cys-248, which acts as the Nucleophile. 5 residues coordinate L-glutamine: Leu-249, Gln-252, Asn-290, Gly-292, and Tyr-293. Catalysis depends on residues His-332 and Glu-334.

It belongs to the CarA family. Composed of two chains; the small (or glutamine) chain promotes the hydrolysis of glutamine to ammonia, which is used by the large (or ammonia) chain to synthesize carbamoyl phosphate. Tetramer of heterodimers (alpha,beta)4.

It carries out the reaction hydrogencarbonate + L-glutamine + 2 ATP + H2O = carbamoyl phosphate + L-glutamate + 2 ADP + phosphate + 2 H(+). The catalysed reaction is L-glutamine + H2O = L-glutamate + NH4(+). Its pathway is amino-acid biosynthesis; L-arginine biosynthesis; carbamoyl phosphate from bicarbonate: step 1/1. It participates in pyrimidine metabolism; UMP biosynthesis via de novo pathway; (S)-dihydroorotate from bicarbonate: step 1/3. Its function is as follows. Small subunit of the glutamine-dependent carbamoyl phosphate synthetase (CPSase). CPSase catalyzes the formation of carbamoyl phosphate from the ammonia moiety of glutamine, carbonate, and phosphate donated by ATP, constituting the first step of 2 biosynthetic pathways, one leading to arginine and/or urea and the other to pyrimidine nucleotides. The small subunit (glutamine amidotransferase) binds and cleaves glutamine to supply the large subunit with the substrate ammonia. The chain is Carbamoyl phosphate synthase small chain from Symbiobacterium thermophilum (strain DSM 24528 / JCM 14929 / IAM 14863 / T).